A 99-amino-acid chain; its full sequence is Fetal and adult testis-expressed transcript protein homolog (99 aa).

Residues 79–98 (AALFTLLVSVCIANLWLWVH) traverse the membrane as a helical segment.

Interacts with BIK and RNF183. Interacts with IMMT/MIC60and EMD.

It localises to the mitochondrion. Its subcellular location is the mitochondrion outer membrane. It is found in the endoplasmic reticulum membrane. In terms of biological role, involved in the regulation of endoplasmic reticulum (ER)-mitochondria coupling. Negatively regulates the ER-mitochondria distance and Ca(2+) transfer from ER to mitochondria possibly implicating it in the regulation of apoptosis. May collaborate with RNF183 to restrain BIK protein levels thus regulating apoptotic signaling. In Mus musculus (Mouse), this protein is Fetal and adult testis-expressed transcript protein homolog (Fate1).